We begin with the raw amino-acid sequence, 58 residues long: Large ribosomal subunit protein uL30 (58 aa).

This sequence belongs to the universal ribosomal protein uL30 family. In terms of assembly, part of the 50S ribosomal subunit.

The polypeptide is Large ribosomal subunit protein uL30 (Wigglesworthia glossinidia brevipalpis).